Here is a 252-residue protein sequence, read N- to C-terminus: Uridylate kinase (252 aa).

ATP is bound at residue 24-27 (KLSG). The involved in allosteric activation by GTP stretch occupies residues 32 to 37 (GEEGFG). Residue Gly66 coordinates UMP. Gly67 and Arg71 together coordinate ATP. UMP contacts are provided by residues Asp86 and 147–154 (TGNPFFTT). ATP contacts are provided by Thr174, Tyr180, and Asp183.

This sequence belongs to the UMP kinase family. Homohexamer.

Its subcellular location is the cytoplasm. It carries out the reaction UMP + ATP = UDP + ADP. Its pathway is pyrimidine metabolism; CTP biosynthesis via de novo pathway; UDP from UMP (UMPK route): step 1/1. With respect to regulation, allosterically activated by GTP. Inhibited by UTP. Catalyzes the reversible phosphorylation of UMP to UDP. In Alcanivorax borkumensis (strain ATCC 700651 / DSM 11573 / NCIMB 13689 / SK2), this protein is Uridylate kinase.